Consider the following 835-residue polypeptide: Leucine--tRNA ligase (835 aa).

The short motif at 42–52 is the 'HIGH' region element; that stretch reads PYPSGRIHMGH. Positions 612 to 616 match the 'KMSKS' region motif; it reads KMSKS. Lys-615 contributes to the ATP binding site.

Belongs to the class-I aminoacyl-tRNA synthetase family.

The protein localises to the cytoplasm. The enzyme catalyses tRNA(Leu) + L-leucine + ATP = L-leucyl-tRNA(Leu) + AMP + diphosphate. The chain is Leucine--tRNA ligase from Rhizorhabdus wittichii (strain DSM 6014 / CCUG 31198 / JCM 15750 / NBRC 105917 / EY 4224 / RW1) (Sphingomonas wittichii).